The primary structure comprises 701 residues: Elongation factor G (701 aa).

The 277-residue stretch at 11 to 287 folds into the tr-type G domain; it reads TKVRNIGIMA…AVIDYLPSPL (277 aa). Residues 20 to 27, 84 to 88, and 138 to 141 contribute to the GTP site; these read AHIDAGKT, DTPGH, and NKMD.

It belongs to the TRAFAC class translation factor GTPase superfamily. Classic translation factor GTPase family. EF-G/EF-2 subfamily.

Its subcellular location is the cytoplasm. Its function is as follows. Catalyzes the GTP-dependent ribosomal translocation step during translation elongation. During this step, the ribosome changes from the pre-translocational (PRE) to the post-translocational (POST) state as the newly formed A-site-bound peptidyl-tRNA and P-site-bound deacylated tRNA move to the P and E sites, respectively. Catalyzes the coordinated movement of the two tRNA molecules, the mRNA and conformational changes in the ribosome. In Mycobacterium ulcerans (strain Agy99), this protein is Elongation factor G.